A 196-amino-acid chain; its full sequence is Gastrula zinc finger protein xLCGF3.1 (196 aa).

C2H2-type zinc fingers lie at residues 6–28, 34–56, 62–84, 90–112, 118–140, 146–168, and 174–196; these read FMCT…HMTH, FTCT…QTIH, FTCI…YMTH, FTCT…QTMH, LTCT…QRVH, FTCT…QTVH, and FTCT…QIVH.

This sequence belongs to the krueppel C2H2-type zinc-finger protein family.

It is found in the nucleus. Functionally, may be involved in transcriptional regulation. The sequence is that of Gastrula zinc finger protein xLCGF3.1 from Xenopus laevis (African clawed frog).